The chain runs to 166 residues: Small ribosomal subunit protein eS10 (166 aa).

The disordered stretch occupies residues 95 to 166; that stretch reads RRQTRPETAR…FGRGRGQQPQ (72 aa). Residues 98–129 show a composition bias toward basic and acidic residues; it reads TRPETARPRPKGLEGERPARLARGEGDRDAYR. Residues 143 to 154 show a composition bias toward low complexity; the sequence is AGAGAATEFQFR. Residues 155–166 are compositionally biased toward gly residues; sequence GGFGRGRGQQPQ.

The protein belongs to the eukaryotic ribosomal protein eS10 family. In terms of assembly, component of the small ribosomal subunit.

It localises to the cytoplasm. It is found in the nucleus. Its subcellular location is the nucleolus. In terms of biological role, component of the 40S ribosomal subunit. The ribosome is a large ribonucleoprotein complex responsible for the synthesis of proteins in the cell. This is Small ribosomal subunit protein eS10 (rps10) from Ictalurus punctatus (Channel catfish).